A 518-amino-acid chain; its full sequence is D-aminopeptidase (518 aa).

Serine 62 serves as the catalytic Nucleophile. The active-site Proton donor/acceptor is the lysine 65. The tract at residues 477-487 (QRSMDAPSPGE) is important for specificity. Position 481 (aspartate 481) interacts with substrate.

This sequence belongs to the peptidase S12 family. Homodimer.

It carries out the reaction Release of an N-terminal D-amino acid from a peptide, Xaa-|-Yaa-, in which Xaa is preferably D-Ala, D-Ser or D-Thr. D-amino acid amides and methyl esters also are hydrolyzed, as is glycine amide.. Its activity is regulated as follows. Inhibited by beta-lactam compounds such as 6-aminopenicillic acid, 7-aminocephalosporanic acid, benzylpenicillin and ampicillin. Inhibited by p-chloromercuribenzoate. Hydrolyzes N-terminal residues in D-amino acid-containing peptides. This Brucella abortus (strain S19) protein is D-aminopeptidase.